Consider the following 354-residue polypeptide: Elongation factor Ts (354 aa).

An involved in Mg(2+) ion dislocation from EF-Tu region spans residues 81 to 84; that stretch reads TDFV.

This sequence belongs to the EF-Ts family.

Its subcellular location is the cytoplasm. In terms of biological role, associates with the EF-Tu.GDP complex and induces the exchange of GDP to GTP. It remains bound to the aminoacyl-tRNA.EF-Tu.GTP complex up to the GTP hydrolysis stage on the ribosome. The sequence is that of Elongation factor Ts from Campylobacter curvus (strain 525.92).